The chain runs to 89 residues: Small ribosomal subunit protein uS17 (89 aa).

Belongs to the universal ribosomal protein uS17 family. Part of the 30S ribosomal subunit.

In terms of biological role, one of the primary rRNA binding proteins, it binds specifically to the 5'-end of 16S ribosomal RNA. In Variovorax paradoxus (strain S110), this protein is Small ribosomal subunit protein uS17.